We begin with the raw amino-acid sequence, 109 residues long: Small ribosomal subunit protein uS10 (109 aa).

Belongs to the universal ribosomal protein uS10 family. In terms of assembly, part of the 30S ribosomal subunit.

In terms of biological role, involved in the binding of tRNA to the ribosomes. The sequence is that of Small ribosomal subunit protein uS10 from Nanoarchaeum equitans (strain Kin4-M).